A 123-amino-acid polypeptide reads, in one-letter code: Protein Wnt-7a (123 aa).

A lipid anchor (O-palmitoleoyl serine; by PORCN) is attached at Ser1. The interval 33–61 (VEPVRASRNKRPTFLKIKKPLSYRKPMDT) is disordered linker. A disulfide bridge connects residues Cys89 and Cys104. Asn90 is a glycosylation site (N-linked (GlcNAc...) asparagine).

Belongs to the Wnt family. In terms of assembly, forms a soluble 1:1 complex with AFM; this prevents oligomerization and is required for prolonged biological activity. The complex with AFM may represent the physiological form in body fluids. Interacts with FZD5. Interacts with PORCN. Post-translationally, palmitoleoylation is required for efficient binding to frizzled receptors. Depalmitoleoylation leads to Wnt signaling pathway inhibition.

Its subcellular location is the secreted. The protein localises to the extracellular space. It localises to the extracellular matrix. Functionally, ligand for members of the frizzled family of seven transmembrane receptors that functions in the canonical Wnt/beta-catenin signaling pathway. Plays an important role in embryonic development, including dorsal versus ventral patterning during limb development, skeleton development and urogenital tract development. Required for central nervous system (CNS) angiogenesis and blood-brain barrier regulation. This is Protein Wnt-7a (WNT7A) from Meleagris gallopavo (Wild turkey).